Reading from the N-terminus, the 249-residue chain is Mediator of RNA polymerase II transcription subunit 19 (249 aa).

2 disordered regions span residues 1–68 (MEGF…SSRR) and 178–249 (QPPK…SGLR). The span at 9-18 (AASEPSSIPS) shows a compositional bias: low complexity. The span at 45–56 (VPGPPLPIPPPL) shows a compositional bias: pro residues. Basic residues-rich tracts occupy residues 179–190 (PPKKKNKKHKQS) and 221–233 (RRKK…KKSR).

This sequence belongs to the Mediator complex subunit 19 family. Component of the Mediator complex.

Its subcellular location is the nucleus. Functionally, component of the Mediator complex, a coactivator involved in the regulated transcription of nearly all RNA polymerase II-dependent genes. Mediator functions as a bridge to convey information from gene-specific regulatory proteins to the basal RNA polymerase II transcription machinery. Mediator is recruited to promoters by direct interactions with regulatory proteins and serves as a scaffold for the assembly of a functional preinitiation complex with RNA polymerase II and the general transcription factors. The protein is Mediator of RNA polymerase II transcription subunit 19 (med19) of Xenopus tropicalis (Western clawed frog).